The primary structure comprises 241 residues: Demethylmenaquinone methyltransferase (241 aa).

Residues Thr-68, Asp-88, and 114 to 115 (DA) each bind S-adenosyl-L-methionine.

Belongs to the class I-like SAM-binding methyltransferase superfamily. MenG/UbiE family.

It carries out the reaction a 2-demethylmenaquinol + S-adenosyl-L-methionine = a menaquinol + S-adenosyl-L-homocysteine + H(+). The protein operates within quinol/quinone metabolism; menaquinone biosynthesis; menaquinol from 1,4-dihydroxy-2-naphthoate: step 2/2. Functionally, methyltransferase required for the conversion of demethylmenaquinol (DMKH2) to menaquinol (MKH2). The protein is Demethylmenaquinone methyltransferase of Deinococcus radiodurans (strain ATCC 13939 / DSM 20539 / JCM 16871 / CCUG 27074 / LMG 4051 / NBRC 15346 / NCIMB 9279 / VKM B-1422 / R1).